Consider the following 524-residue polypeptide: Cytochrome P450 monooxygenase ATR4 (524 aa).

The helical transmembrane segment at 13–36 (IITYLDSLTWVGMALPLFSLCWAI) threads the bilayer. N-linked (GlcNAc...) asparagine glycans are attached at residues Asn-291, Asn-444, and Asn-454.

The protein belongs to the cytochrome P450 family. It depends on heme as a cofactor.

Its subcellular location is the membrane. Its pathway is mycotoxin biosynthesis. Its function is as follows. Cytochrome P450 monooxygenase; part of the core atranone cluster (CAC) which products are predicted to catalyze most or all steps of mycotoxin atranone synthesis, starting from geranylgeranyl pyrophosphate (GGPP). The initial cyclization of GGPP to dolabellane is probably performed by the terpene cyclase ATR13. The Baeyer-Villiger oxidation near the end of the atranone synthesis, which converts atranones D and E to atranones F and G is predicted to be catalyzed by the monooxygenase ATR8. Of the CAC's other predicted gene products, the reducing PKS ATR6 might synthesize a polyketide chain. This polyketide is probably transferred onto the atranone backbone by the polyketide transferase ATR5. Other predicted CAC products include 4 oxygenases (ATR2, ATR3, ATR4, and ATR14), 3 short-chain reductases (ATR7, ATR9, and ATR10), and a methyltransferase (ATR12). These may all be involved in the various steps of atranone biosynthesis, although their specific roles must await experimental determination. The protein is Cytochrome P450 monooxygenase ATR4 of Stachybotrys chlorohalonatus (strain IBT 40285).